Consider the following 116-residue polypeptide: Large ribosomal subunit protein uL22c (116 aa).

Belongs to the universal ribosomal protein uL22 family. Part of the 50S ribosomal subunit.

It localises to the plastid. It is found in the chloroplast. In terms of biological role, this protein binds specifically to 23S rRNA. Functionally, the globular domain of the protein is located near the polypeptide exit tunnel on the outside of the subunit, while an extended beta-hairpin is found that lines the wall of the exit tunnel in the center of the 70S ribosome. The polypeptide is Large ribosomal subunit protein uL22c (rpl22) (Psilotum nudum (Whisk fern)).